A 495-amino-acid polypeptide reads, in one-letter code: Bifunctional protein GlmU (495 aa).

Residues methionine 1–arginine 241 form a pyrophosphorylase region. Residues leucine 12 to glycine 15, lysine 26, glutamine 83, glycine 88 to threonine 89, serine 112 to aspartate 114, glycine 151, glutamate 166, asparagine 181, and asparagine 239 each bind UDP-N-acetyl-alpha-D-glucosamine. Aspartate 114 provides a ligand contact to Mg(2+). A Mg(2+)-binding site is contributed by asparagine 239. Residues valine 242 to alanine 262 form a linker region. The N-acetyltransferase stretch occupies residues glycine 263–proline 495. UDP-N-acetyl-alpha-D-glucosamine-binding residues include arginine 344 and lysine 362. Catalysis depends on histidine 374, which acts as the Proton acceptor. Tyrosine 377 and asparagine 388 together coordinate UDP-N-acetyl-alpha-D-glucosamine. Residues alanine 391, asparagine 397–tyrosine 398, serine 416, and alanine 434 each bind acetyl-CoA. The disordered stretch occupies residues isoleucine 457–proline 495. Low complexity predominate over residues glutamine 483–proline 495.

This sequence in the N-terminal section; belongs to the N-acetylglucosamine-1-phosphate uridyltransferase family. It in the C-terminal section; belongs to the transferase hexapeptide repeat family. In terms of assembly, homotrimer. Mg(2+) serves as cofactor.

The protein resides in the cytoplasm. The enzyme catalyses alpha-D-glucosamine 1-phosphate + acetyl-CoA = N-acetyl-alpha-D-glucosamine 1-phosphate + CoA + H(+). The catalysed reaction is N-acetyl-alpha-D-glucosamine 1-phosphate + UTP + H(+) = UDP-N-acetyl-alpha-D-glucosamine + diphosphate. It participates in nucleotide-sugar biosynthesis; UDP-N-acetyl-alpha-D-glucosamine biosynthesis; N-acetyl-alpha-D-glucosamine 1-phosphate from alpha-D-glucosamine 6-phosphate (route II): step 2/2. The protein operates within nucleotide-sugar biosynthesis; UDP-N-acetyl-alpha-D-glucosamine biosynthesis; UDP-N-acetyl-alpha-D-glucosamine from N-acetyl-alpha-D-glucosamine 1-phosphate: step 1/1. Its pathway is bacterial outer membrane biogenesis; LPS lipid A biosynthesis. Its function is as follows. Catalyzes the last two sequential reactions in the de novo biosynthetic pathway for UDP-N-acetylglucosamine (UDP-GlcNAc). The C-terminal domain catalyzes the transfer of acetyl group from acetyl coenzyme A to glucosamine-1-phosphate (GlcN-1-P) to produce N-acetylglucosamine-1-phosphate (GlcNAc-1-P), which is converted into UDP-GlcNAc by the transfer of uridine 5-monophosphate (from uridine 5-triphosphate), a reaction catalyzed by the N-terminal domain. The protein is Bifunctional protein GlmU of Mycobacterium bovis (strain ATCC BAA-935 / AF2122/97).